Reading from the N-terminus, the 612-residue chain is 1,8-cineole synthase, chloroplastic (612 aa).

The transit peptide at 1-52 directs the protein to the chloroplast; that stretch reads MALVCGAPLASRSCLNKSLISSTHELKPLRRTILPTLRWKSATPSINMCLTT. Mg(2+)-binding residues include Asp363, Asp367, and Asp515. Positions 363–367 match the DDXXD motif motif; the sequence is DDIYD.

This sequence belongs to the terpene synthase family. Tpsd subfamily. The cofactor is Mg(2+). Requires Mn(2+) as cofactor.

The protein resides in the plastid. It localises to the chloroplast. It catalyses the reaction (2E)-geranyl diphosphate + H2O = 1,8-cineole + diphosphate. Its pathway is terpene metabolism; oleoresin biosynthesis. Functionally, terpene synthase (TPS) involved in the biosynthesis of monoterpene natural products included in conifer oleoresin secretions and volatile emissions; these compounds contribute to biotic and abiotic stress defense against herbivores and pathogens. Catalyzes the conversion of (2E)-geranyl diphosphate (GPP) to 1,8-cineole. The chain is 1,8-cineole synthase, chloroplastic from Picea glauca (White spruce).